We begin with the raw amino-acid sequence, 135 residues long: Transcription antitermination protein NusB (135 aa).

This sequence belongs to the NusB family.

Involved in transcription antitermination. Required for transcription of ribosomal RNA (rRNA) genes. Binds specifically to the boxA antiterminator sequence of the ribosomal RNA (rrn) operons. This chain is Transcription antitermination protein NusB, found in Clostridium acetobutylicum (strain ATCC 824 / DSM 792 / JCM 1419 / IAM 19013 / LMG 5710 / NBRC 13948 / NRRL B-527 / VKM B-1787 / 2291 / W).